The following is a 361-amino-acid chain: Peptide chain release factor 1 (361 aa).

Gln235 is modified (N5-methylglutamine).

Belongs to the prokaryotic/mitochondrial release factor family. Post-translationally, methylated by PrmC. Methylation increases the termination efficiency of RF1.

It localises to the cytoplasm. Peptide chain release factor 1 directs the termination of translation in response to the peptide chain termination codons UAG and UAA. The protein is Peptide chain release factor 1 of Rhodopseudomonas palustris (strain ATCC BAA-98 / CGA009).